The following is a 65-amino-acid chain: Large ribosomal subunit protein bL35 (65 aa).

It belongs to the bacterial ribosomal protein bL35 family.

In Alkalilimnicola ehrlichii (strain ATCC BAA-1101 / DSM 17681 / MLHE-1), this protein is Large ribosomal subunit protein bL35.